A 238-amino-acid polypeptide reads, in one-letter code: MGRKWANIVAKKTAKDGANSKVYAKFGVEIYVAAKKGDPDPETNSALKFVIDRAKQAQVPKHIIDKAIDKAKGNTDETFVEGRYEGFGPNGSMIIVDTLTSNVNRTAANVRSAFGKNGGNMGASGSVSFMFDKKGVVVFAGDDADAIFELLLEADVEVDDVEAEDGTITIYTAPTDLHKAIVALKESGIQEFNVTELEMIPQSEVSLEGDDLATFEKLYDALEDDEDVQKIYTNVDGF.

It belongs to the TACO1 family. YeeN subfamily.

Its subcellular location is the cytoplasm. In Streptococcus suis (strain 05ZYH33), this protein is Probable transcriptional regulatory protein SSU05_0402.